Here is a 181-residue protein sequence, read N- to C-terminus: CDP-diacylglycerol--glycerol-3-phosphate 3-phosphatidyltransferase (181 aa).

4 consecutive transmembrane segments (helical) span residues 8-28 (PNYLTIARIMVIPVIILAFYI), 35-55 (KLGALLFVLASITDFFDGYIA), 64-84 (FGKMFDPIADKLLIGCVIIML), and 148-168 (IIYLDIVGEIILWIAAFLTII).

The protein belongs to the CDP-alcohol phosphatidyltransferase class-I family.

The protein localises to the cell membrane. It catalyses the reaction a CDP-1,2-diacyl-sn-glycerol + sn-glycerol 3-phosphate = a 1,2-diacyl-sn-glycero-3-phospho-(1'-sn-glycero-3'-phosphate) + CMP + H(+). It participates in phospholipid metabolism; phosphatidylglycerol biosynthesis; phosphatidylglycerol from CDP-diacylglycerol: step 1/2. Its function is as follows. This protein catalyzes the committed step to the synthesis of the acidic phospholipids. This chain is CDP-diacylglycerol--glycerol-3-phosphate 3-phosphatidyltransferase (pgsA), found in Rickettsia felis (strain ATCC VR-1525 / URRWXCal2) (Rickettsia azadi).